The following is a 231-amino-acid chain: MTISSPVIVALDYPDAAQALAMAQQLDPAKVRVKVGKEIFTRSGPAVVDSLHKLGFEVFLDLKFHDIPNTVAGAVAAAADMGVWMVNVHASGGQRMMEGAANAIANHAQRPHLIAVTVLTSMDDSDLQQVGVVDVPKVQVQRLAELAKASGMDGVVCSAQEAGLLKQACGAAFELVTPGIRPQGTAAGDQRRVLTPVQARDAGVDYMVIGRPITQSETPTDVVDTILRSLA.

Residues D12, K34, 61–70 (DLKFHDIPNT), T120, R181, Q190, G210, and R211 contribute to the substrate site. K63 functions as the Proton donor in the catalytic mechanism.

Belongs to the OMP decarboxylase family. Type 1 subfamily. As to quaternary structure, homodimer.

It carries out the reaction orotidine 5'-phosphate + H(+) = UMP + CO2. Its pathway is pyrimidine metabolism; UMP biosynthesis via de novo pathway; UMP from orotate: step 2/2. Catalyzes the decarboxylation of orotidine 5'-monophosphate (OMP) to uridine 5'-monophosphate (UMP). In Alcanivorax borkumensis (strain ATCC 700651 / DSM 11573 / NCIMB 13689 / SK2), this protein is Orotidine 5'-phosphate decarboxylase.